The following is a 621-amino-acid chain: Complex I assembly factor ACAD9, mitochondrial (621 aa).

Residues 1-37 (MSGCGLFLRTTAAARACRGLVVSTANRRLLRTSPPVR) constitute a mitochondrion transit peptide. At K41 the chain carries N6-acetyllysine. K92 carries the post-translational modification N6-succinyllysine. E426 functions as the Proton acceptor in the catalytic mechanism. The residue at position 478 (T478) is a Phosphothreonine. K521 is subject to N6-acetyllysine; alternate. The residue at position 521 (K521) is an N6-succinyllysine; alternate.

It belongs to the acyl-CoA dehydrogenase family. Homodimer. Interacts with NDUFAF1 and ECSIT. Part of the mitochondrial complex I assembly/MCIA complex that comprises at least the core subunits TMEM126B, NDUFAF1, ECSIT and ACAD9 and complement subunits such as COA1 and TMEM186. Interacts with TMEM70 and TMEM242. Requires FAD as cofactor. As to expression, ubiquitously expressed in most normal human tissues and cancer cell lines with high level of expression in heart, skeletal muscles, brain, kidney and liver. In the cerebellum uniquely expressed in the granular layer (at protein level).

The protein resides in the mitochondrion inner membrane. The enzyme catalyses eicosanoyl-CoA + oxidized [electron-transfer flavoprotein] + H(+) = (2E)-eicosenoyl-CoA + reduced [electron-transfer flavoprotein]. It carries out the reaction octadecanoyl-CoA + oxidized [electron-transfer flavoprotein] + H(+) = (2E)-octadecenoyl-CoA + reduced [electron-transfer flavoprotein]. The catalysed reaction is oxidized [electron-transfer flavoprotein] + hexadecanoyl-CoA + H(+) = (2E)-hexadecenoyl-CoA + reduced [electron-transfer flavoprotein]. It catalyses the reaction decanoyl-CoA + oxidized [electron-transfer flavoprotein] + H(+) = (2E)-decenoyl-CoA + reduced [electron-transfer flavoprotein]. The enzyme catalyses nonanoyl-CoA + oxidized [electron-transfer flavoprotein] + H(+) = (2E)-nonenoyl-CoA + reduced [electron-transfer flavoprotein]. It carries out the reaction pentadecanoyl-CoA + oxidized [electron-transfer flavoprotein] + H(+) = (2E)-pentadecenoyl-CoA + reduced [electron-transfer flavoprotein]. The catalysed reaction is undecanoyl-CoA + oxidized [electron-transfer flavoprotein] + H(+) = trans-2-undecenoyl-CoA + reduced [electron-transfer flavoprotein]. It catalyses the reaction (9Z)-hexadecenoyl-CoA + oxidized [electron-transfer flavoprotein] + H(+) = (2E,9Z)-hexadecadienoyl-CoA + reduced [electron-transfer flavoprotein]. The enzyme catalyses heptadecanoyl-CoA + oxidized [electron-transfer flavoprotein] + H(+) = trans-2-heptadecenoyl-CoA + reduced [electron-transfer flavoprotein]. It carries out the reaction (9E)-octadecenoyl-CoA + oxidized [electron-transfer flavoprotein] + H(+) = (2E,9E)-octadecadienoyl-CoA + reduced [electron-transfer flavoprotein]. The catalysed reaction is oxidized [electron-transfer flavoprotein] + (9Z)-octadecenoyl-CoA + H(+) = (2E,9Z)-octadecadienoyl-CoA + reduced [electron-transfer flavoprotein]. It catalyses the reaction (9Z,12Z)-octadecadienoyl-CoA + oxidized [electron-transfer flavoprotein] + H(+) = (2E,9Z,12Z)-octadecatrienoyl-CoA + reduced [electron-transfer flavoprotein]. The enzyme catalyses (4Z,7Z,10Z,13Z,16Z,19Z)-docosahexaenoyl-CoA + oxidized [electron-transfer flavoprotein] + H(+) = (2E,4Z,7Z,10Z,13Z,16Z,19Z)-docosaheptaenoyl-CoA + reduced [electron-transfer flavoprotein]. It carries out the reaction tetradecanoyl-CoA + oxidized [electron-transfer flavoprotein] + H(+) = (2E)-tetradecenoyl-CoA + reduced [electron-transfer flavoprotein]. Its function is as follows. As part of the MCIA complex, primarily participates in the assembly of the mitochondrial complex I and therefore plays a role in oxidative phosphorylation. This moonlighting protein also has a dehydrogenase activity toward a broad range of substrates with greater specificity for long-chain unsaturated acyl-CoAs. However, in vivo, it does not seem to play a primary role in fatty acid oxidation. In addition, the function in complex I assembly is independent of the dehydrogenase activity of the protein. This chain is Complex I assembly factor ACAD9, mitochondrial, found in Homo sapiens (Human).